The chain runs to 365 residues: tRNA N6-adenosine threonylcarbamoyltransferase (365 aa).

2 residues coordinate Fe cation: His119 and His123. Substrate contacts are provided by residues 141–145, Asp174, Gly187, and Asn288; that span reads LVSGG. A Fe cation-binding site is contributed by Asp316.

Belongs to the KAE1 / TsaD family. Requires Fe(2+) as cofactor.

It is found in the cytoplasm. It catalyses the reaction L-threonylcarbamoyladenylate + adenosine(37) in tRNA = N(6)-L-threonylcarbamoyladenosine(37) in tRNA + AMP + H(+). Its function is as follows. Required for the formation of a threonylcarbamoyl group on adenosine at position 37 (t(6)A37) in tRNAs that read codons beginning with adenine. Is involved in the transfer of the threonylcarbamoyl moiety of threonylcarbamoyl-AMP (TC-AMP) to the N6 group of A37, together with TsaE and TsaB. TsaD likely plays a direct catalytic role in this reaction. The chain is tRNA N6-adenosine threonylcarbamoyltransferase from Rhizobium etli (strain CIAT 652).